Consider the following 347-residue polypeptide: NADH-ubiquinone oxidoreductase chain 2 (347 aa).

The next 11 helical transmembrane spans lie at 3–23, 25–45, 59–79, 96–116, 122–142, 149–169, 178–198, 200–220, 242–262, 274–294, and 323–343; these read PPILFTILLTVISGTMIVLMS, HWLMIWIGFEMNTLAIIPILM, YFLTQATASMILMMGITINLM, TMMTIALAMKLGLAPFHFWVP, VHMSSGLILLTWQKIAPLLVL, IDPNLLLPMAMMSVLIGGWGG, ILAYSSIAHMGWMATITLYNP, MMLLNLTIYIIMTLTTFMLFM, SLILMLMLSLGGLPPLSGFIP, EMIIMPTLLAITALLNLYFYM, and MILLPPLTVISTMLLPITPLL.

This sequence belongs to the complex I subunit 2 family. As to quaternary structure, core subunit of respiratory chain NADH dehydrogenase (Complex I) which is composed of 45 different subunits. Interacts with TMEM242.

It is found in the mitochondrion inner membrane. It catalyses the reaction a ubiquinone + NADH + 5 H(+)(in) = a ubiquinol + NAD(+) + 4 H(+)(out). In terms of biological role, core subunit of the mitochondrial membrane respiratory chain NADH dehydrogenase (Complex I) that is believed to belong to the minimal assembly required for catalysis. Complex I functions in the transfer of electrons from NADH to the respiratory chain. The immediate electron acceptor for the enzyme is believed to be ubiquinone. In Suricata suricatta (Meerkat), this protein is NADH-ubiquinone oxidoreductase chain 2.